A 124-amino-acid polypeptide reads, in one-letter code: Small ribosomal subunit protein bS6 (124 aa).

Residues 99-124 form a disordered region; the sequence is PLPAPRIVPGSEPEPVEQQEAAAVEA. A compositionally biased stretch (low complexity) spans 114–124; it reads VEQQEAAAVEA.

This sequence belongs to the bacterial ribosomal protein bS6 family.

Its function is as follows. Binds together with bS18 to 16S ribosomal RNA. This Prochlorococcus marinus (strain MIT 9303) protein is Small ribosomal subunit protein bS6.